We begin with the raw amino-acid sequence, 1137 residues long: Phytochrome C (1137 aa).

Residues 1 to 18 are compositionally biased toward low complexity; that stretch reads MSSSRSNNRATCSRSSSA. The tract at residues 1–27 is disordered; it reads MSSSRSNNRATCSRSSSARSKHSARVV. Residues 217–400 enclose the GAF domain; it reads NLSLLCDVLV…VFGIQINKEV (184 aa). Cysteine 322 serves as a coordination point for phytochromobilin. PAS domains are found at residues 620–690 and 750–824; these read VTNE…LQGI and IQGD…TKLS. The Histidine kinase domain occupies 904-1124; it reads YIRQELRNPL…IVLVEFPVAQ (221 aa).

It belongs to the phytochrome family. As to quaternary structure, homodimer. Contains one covalently linked phytochromobilin chromophore.

Regulatory photoreceptor which exists in two forms that are reversibly interconvertible by light: the Pr form that absorbs maximally in the red region of the spectrum and the Pfr form that absorbs maximally in the far-red region. Photoconversion of Pr to Pfr induces an array of morphogenic responses, whereas reconversion of Pfr to Pr cancels the induction of those responses. Pfr controls the expression of a number of nuclear genes including those encoding the small subunit of ribulose-bisphosphate carboxylase, chlorophyll A/B binding protein, protochlorophyllide reductase, rRNA, etc. It also controls the expression of its own gene(s) in a negative feedback fashion. The polypeptide is Phytochrome C (PHYC) (Oryza sativa subsp. indica (Rice)).